We begin with the raw amino-acid sequence, 1341 residues long: DNA-directed RNA polymerase subunit beta (1341 aa).

This sequence belongs to the RNA polymerase beta chain family. In terms of assembly, the RNAP catalytic core consists of 2 alpha, 1 beta, 1 beta' and 1 omega subunit. When a sigma factor is associated with the core the holoenzyme is formed, which can initiate transcription.

The catalysed reaction is RNA(n) + a ribonucleoside 5'-triphosphate = RNA(n+1) + diphosphate. In terms of biological role, DNA-dependent RNA polymerase catalyzes the transcription of DNA into RNA using the four ribonucleoside triphosphates as substrates. This is DNA-directed RNA polymerase subunit beta from Blochmanniella pennsylvanica (strain BPEN).